The sequence spans 115 residues: NAD(P)H-quinone oxidoreductase subunit M (115 aa).

This sequence belongs to the complex I NdhM subunit family. As to quaternary structure, NDH-1 can be composed of about 15 different subunits; different subcomplexes with different compositions have been identified which probably have different functions.

It localises to the cellular thylakoid membrane. It catalyses the reaction a plastoquinone + NADH + (n+1) H(+)(in) = a plastoquinol + NAD(+) + n H(+)(out). It carries out the reaction a plastoquinone + NADPH + (n+1) H(+)(in) = a plastoquinol + NADP(+) + n H(+)(out). NDH-1 shuttles electrons from an unknown electron donor, via FMN and iron-sulfur (Fe-S) centers, to quinones in the respiratory and/or the photosynthetic chain. The immediate electron acceptor for the enzyme in this species is believed to be plastoquinone. Couples the redox reaction to proton translocation, and thus conserves the redox energy in a proton gradient. Cyanobacterial NDH-1 also plays a role in inorganic carbon-concentration. The polypeptide is NAD(P)H-quinone oxidoreductase subunit M (Parasynechococcus marenigrum (strain WH8102)).